A 387-amino-acid polypeptide reads, in one-letter code: ATP phosphoribosyltransferase regulatory subunit (387 aa).

This sequence belongs to the class-II aminoacyl-tRNA synthetase family. HisZ subfamily. In terms of assembly, heteromultimer composed of HisG and HisZ subunits.

Its subcellular location is the cytoplasm. It participates in amino-acid biosynthesis; L-histidine biosynthesis; L-histidine from 5-phospho-alpha-D-ribose 1-diphosphate: step 1/9. In terms of biological role, required for the first step of histidine biosynthesis. May allow the feedback regulation of ATP phosphoribosyltransferase activity by histidine. The protein is ATP phosphoribosyltransferase regulatory subunit of Methylobacillus flagellatus (strain ATCC 51484 / DSM 6875 / VKM B-1610 / KT).